A 736-amino-acid chain; its full sequence is Polyribonucleotide nucleotidyltransferase (736 aa).

Residues Asp-518 and Asp-524 each contribute to the Mg(2+) site. The region spanning 584-644 (PSLQIFSINP…QKVEAAKEHI (61 aa)) is the KH domain. One can recognise an S1 motif domain in the interval 665-732 (GEVFKGKVKK…NKNKVELGRA (68 aa)).

This sequence belongs to the polyribonucleotide nucleotidyltransferase family. The cofactor is Mg(2+).

The protein resides in the cytoplasm. It carries out the reaction RNA(n+1) + phosphate = RNA(n) + a ribonucleoside 5'-diphosphate. Involved in mRNA degradation. Catalyzes the phosphorolysis of single-stranded polyribonucleotides processively in the 3'- to 5'-direction. This is Polyribonucleotide nucleotidyltransferase from Wolinella succinogenes (strain ATCC 29543 / DSM 1740 / CCUG 13145 / JCM 31913 / LMG 7466 / NCTC 11488 / FDC 602W) (Vibrio succinogenes).